Consider the following 220-residue polypeptide: Deoxyribose-phosphate aldolase (220 aa).

Asp-89 serves as the catalytic Proton donor/acceptor. The active-site Schiff-base intermediate with acetaldehyde is Lys-151. Lys-180 acts as the Proton donor/acceptor in catalysis.

This sequence belongs to the DeoC/FbaB aldolase family. DeoC type 1 subfamily.

The protein resides in the cytoplasm. It carries out the reaction 2-deoxy-D-ribose 5-phosphate = D-glyceraldehyde 3-phosphate + acetaldehyde. Its pathway is carbohydrate degradation; 2-deoxy-D-ribose 1-phosphate degradation; D-glyceraldehyde 3-phosphate and acetaldehyde from 2-deoxy-alpha-D-ribose 1-phosphate: step 2/2. In terms of biological role, catalyzes a reversible aldol reaction between acetaldehyde and D-glyceraldehyde 3-phosphate to generate 2-deoxy-D-ribose 5-phosphate. This is Deoxyribose-phosphate aldolase from Lactococcus lactis subsp. lactis (strain IL1403) (Streptococcus lactis).